A 373-amino-acid chain; its full sequence is Chaperone protein DnaJ (373 aa).

The 65-residue stretch at 4–68 folds into the J domain; sequence NYYQILGVSK…QKRAAYDRLG (65 aa). A CR-type zinc finger spans residues 136 to 214; it reads GIEKNINFSS…CHGMGRYHKQ (79 aa). 8 residues coordinate Zn(2+): C149, C152, C166, C169, C188, C191, C202, and C205. CXXCXGXG motif repeat units lie at residues 149 to 156, 166 to 173, 188 to 195, and 202 to 209; these read CDTCHGSG, CDACSGVG, CHKCQGNG, and CKKCHGMG.

It belongs to the DnaJ family. As to quaternary structure, homodimer. It depends on Zn(2+) as a cofactor.

It localises to the cytoplasm. Functionally, participates actively in the response to hyperosmotic and heat shock by preventing the aggregation of stress-denatured proteins and by disaggregating proteins, also in an autonomous, DnaK-independent fashion. Unfolded proteins bind initially to DnaJ; upon interaction with the DnaJ-bound protein, DnaK hydrolyzes its bound ATP, resulting in the formation of a stable complex. GrpE releases ADP from DnaK; ATP binding to DnaK triggers the release of the substrate protein, thus completing the reaction cycle. Several rounds of ATP-dependent interactions between DnaJ, DnaK and GrpE are required for fully efficient folding. Also involved, together with DnaK and GrpE, in the DNA replication of plasmids through activation of initiation proteins. This Rickettsia rickettsii (strain Iowa) protein is Chaperone protein DnaJ.